We begin with the raw amino-acid sequence, 103 residues long: Small ribosomal subunit protein uS10 (103 aa).

Belongs to the universal ribosomal protein uS10 family. Part of the 30S ribosomal subunit.

In terms of biological role, involved in the binding of tRNA to the ribosomes. This Nitratiruptor sp. (strain SB155-2) protein is Small ribosomal subunit protein uS10.